The sequence spans 25 residues: Caerin-2.2 (25 aa).

Belongs to the frog skin active peptide (FSAP) family. Caerin subfamily. In terms of tissue distribution, expressed by the skin parotoid and/or rostral glands.

It localises to the secreted. Antimicrobial peptide, that adopts an alpha helical conformation which can disrupt bacterial membranes. Each caerin displays a different antimicrobial specificity. The sequence is that of Caerin-2.2 from Ranoidea caerulea (Green tree frog).